The sequence spans 314 residues: Ketimine reductase mu-crystallin (314 aa).

Arginine 47 is a binding site for 3,3',5-triiodo-L-thyronine. NADPH contacts are provided by serine 91, histidine 92, arginine 119, alanine 144, valine 146, glutamine 147, asparagine 168, arginine 169, threonine 170, asparagine 173, threonine 205, methionine 206, and valine 226. Glutamate 257 provides a ligand contact to 3,3',5-triiodo-L-thyronine. An NADPH-binding site is contributed by serine 292.

This sequence belongs to the ornithine cyclodeaminase/mu-crystallin family. In terms of assembly, homodimer. Binds the thyroid hormone triiodothyronine (T3); T3 binding inhibits enzymatic activity. In terms of tissue distribution, expressed at high abundance in lens, but outside the lens it is preferentially expressed in neural tissues, retina and brain.

It is found in the cytoplasm. The catalysed reaction is L-pipecolate + NADP(+) = Delta(1)-piperideine-2-carboxylate + NADPH + H(+). It carries out the reaction L-pipecolate + NAD(+) = Delta(1)-piperideine-2-carboxylate + NADH + H(+). It catalyses the reaction L-proline + NADP(+) = 1-pyrroline-2-carboxylate + NADPH + H(+). The enzyme catalyses L-proline + NAD(+) = 1-pyrroline-2-carboxylate + NADH + H(+). The catalysed reaction is (3R)-1,4-thiomorpholine-3-carboxylate + NAD(+) = 3,4-dehydrothiomorpholine-3-carboxylate + NADH + 2 H(+). It carries out the reaction (3R)-1,4-thiomorpholine-3-carboxylate + NADP(+) = 3,4-dehydrothiomorpholine-3-carboxylate + NADPH + 2 H(+). It catalyses the reaction (S)-cystathionine ketimine + NADH + 2 H(+) = (3R,5S)-2,3,5,6,7-pentahydro-1,4-thiazepine-3,5-dicarboxylate + NAD(+). The enzyme catalyses (S)-cystathionine ketimine + NADPH + 2 H(+) = (3R,5S)-2,3,5,6,7-pentahydro-1,4-thiazepine-3,5-dicarboxylate + NADP(+). The catalysed reaction is (R)-lanthionine ketimine + NADPH + 2 H(+) = (3R,5R)-1,4-thiomorpholine-3,5-dicarboxylate + NADP(+). It carries out the reaction Delta(2)-thiazoline-2-carboxylate + NADPH + 2 H(+) = L-thiazolidine-2-carboxylate + NADP(+). Catalyzes the NAD(P)H-dependent reduction of imine double bonds of a number of cyclic ketimine substrates, including sulfur-containing cyclic ketimines. Under physiological conditions, it efficiently catalyzes delta(1)-piperideine-2-carboxylate (P2C) and delta(1)-pyrroline-2-carboxylate (Pyr2C) reduction, suggesting a central role in lysine and glutamate metabolism. Additional substrates are delta(2)-thiazoline-2-carboxylate (T2C), 3,4-dehydrothiomorpholine-3-carboxylate (AECK), and (R)-lanthionine ketimine (LK) that is reduced at very low rate compared to other substrates. Also catalyzes the NAD(P)H-dependent reduction of (S)-cystathionine ketimine (CysK). The protein is Ketimine reductase mu-crystallin (CRYM) of Macropus fuliginosus (Western gray kangaroo).